The primary structure comprises 151 residues: Caveolin-3 (151 aa).

Topologically, residues 1–83 (MMAEEHTDLE…RLLSTLLGVP (83 aa)) are cytoplasmic. Lysine 38 participates in a covalent cross-link: Glycyl lysine isopeptide (Lys-Gly) (interchain with G-Cter in SUMO3). A required for interaction with DAG1 region spans residues 64–114 (TFTVSKYWCYRLLSTLLGVPLALLWGFLFACISFCHIWAVVPCIKSYLIEI). Residues 84–104 (LALLWGFLFACISFCHIWAVV) constitute an intramembrane region (helical). Topologically, residues 105-151 (PCIKSYLIEIQCISHIYSLCIRTFCNPLFAALGQVCSNIKVMLRKEV) are cytoplasmic.

It belongs to the caveolin family. As to quaternary structure, homooligomer. Interacts with DYSF. Interacts with DLG1 and KCNA5; forms a ternary complex. Interacts with DAG1 (via its C-terminal); the interaction prevents binding of DAG1 with DMD. Interacts with TRIM72. Interacts with MUSK; may regulate MUSK signaling. Interacts with POPDC1. Interacts with CAVIN1, CAVIN2 and CAVIN4. Sumoylation with SUMO3 by PIAS4 may reduce agonist-induced internalization and desensitization of adrenergic receptor ABRD2.

The protein localises to the golgi apparatus membrane. Its subcellular location is the cell membrane. It is found in the membrane. The protein resides in the caveola. It localises to the sarcolemma. Its function is as follows. May act as a scaffolding protein within caveolar membranes. Interacts directly with G-protein alpha subunits and can functionally regulate their activity. May also regulate voltage-gated potassium channels. Plays a role in the sarcolemma repair mechanism of both skeletal muscle and cardiomyocytes that permits rapid resealing of membranes disrupted by mechanical stress. Mediates the recruitment of CAVIN2 and CAVIN3 proteins to the caveolae. The polypeptide is Caveolin-3 (CAV3) (Bos taurus (Bovine)).